We begin with the raw amino-acid sequence, 324 residues long: Germination protease (324 aa).

The propeptide occupies 1–10 (MIIVLGIRTD).

Belongs to the peptidase A25 family. As to quaternary structure, homotetramer. In terms of processing, autoproteolytically processed. The inactive tetrameric zymogen termed p46 autoprocesses to a smaller form termed p41, which is active only during spore germination.

It carries out the reaction Endopeptidase action with P4 Glu or Asp, P1 preferably Glu &gt; Asp, P1' hydrophobic and P2' Ala.. Its function is as follows. Initiates the rapid degradation of small, acid-soluble proteins during spore germination. The protein is Germination protease of Caldanaerobacter subterraneus subsp. tengcongensis (strain DSM 15242 / JCM 11007 / NBRC 100824 / MB4) (Thermoanaerobacter tengcongensis).